A 360-amino-acid chain; its full sequence is Heme A synthase (360 aa).

8 helical membrane passes run 29-49, 111-131, 139-159, 175-195, 210-230, 269-289, 309-329, and 330-350; these read WLFL…ATRL, FLGR…WWTG, LGLV…WIMV, LAAH…LAAG, LTAL…GLVA, VALV…LALL, ALAG…LLAV, and PLWA…MAVA. His-276 is a heme binding site. Residue His-337 participates in heme binding.

The protein belongs to the COX15/CtaA family. Type 2 subfamily. As to quaternary structure, interacts with CtaB. It depends on heme b as a cofactor.

It is found in the cell membrane. The catalysed reaction is Fe(II)-heme o + 2 A + H2O = Fe(II)-heme a + 2 AH2. The protein operates within porphyrin-containing compound metabolism; heme A biosynthesis; heme A from heme O: step 1/1. Catalyzes the conversion of heme O to heme A by two successive hydroxylations of the methyl group at C8. The first hydroxylation forms heme I, the second hydroxylation results in an unstable dihydroxymethyl group, which spontaneously dehydrates, resulting in the formyl group of heme A. This is Heme A synthase from Methylobacterium sp. (strain 4-46).